Here is a 512-residue protein sequence, read N- to C-terminus: MNLQLDYFSITSFLVFLVVLFRIVSDWNKKSTNLRLPPGPSKLPIIGSVHHMIGLDVDLPYHALTDLAKKYGPLMHLQLGQMSLVVASSAKMFKELMKENDLAISQRPVPYVARVLNDAGRDIAFVPYGDYWRQIRKISRMELFSVRKVQSLYYIREDQSNKMIDAIGGSAETVMNLSKAVSDYTSTVVARAAFGSGCKDQDKFIKLSLEMVAAAGAVSTLPDMFPALGFIPVLSGKKAFLQNIQKEADKILDYIIDEHIQRTKSKDYDGKESDKEDIVDVLLRLEKTGELEIPITTPDIKAVIWSVFAGGTDTSSTTTLWAMSELMRNPKVMEKVQAEVREKLKGKKEILEADIQDLPYMRAVIKETLRLRIPGPLLLPRETMEPIEVDGYVIPEKTKILFNAWAVTRDPELWENPESFIPERFIEKQIDFKGTNYEFTPFGSGRRICPGMNFGIANVELPLAKLLYYFNWQLPHGMKPEDLDMTAKFGVVCGRKNDLFLIPTPYNIEVEN.

The helical transmembrane segment at 1 to 21 (MNLQLDYFSITSFLVFLVVLF) threads the bilayer. N436 contacts heme.

It belongs to the cytochrome P450 family. It depends on heme as a cofactor. In terms of tissue distribution, mainly expressed in petioles and roots, and, to a lower extent, in leaves.

It is found in the membrane. It carries out the reaction tirucalla-7,24-dien-3beta-ol + 2 reduced [NADPH--hemoprotein reductase] + 2 O2 = dihydroniloticin + 2 oxidized [NADPH--hemoprotein reductase] + 2 H2O + 2 H(+). It functions in the pathway secondary metabolite biosynthesis; terpenoid biosynthesis. Its function is as follows. Monooxygenase involved in the biosynthesis of limonoids triterpene natural products such as azadirachtin, an antifeedant widely used as bioinsecticide, and possessing many medicinal applications including anti-tumoral, anti-malarial, anti-rheumatic, antibacterial, anti-inflammatory, anti-pyretic and diuretic effects. Catalyzes the conversion of tirucalladienol to dihydroniloticin. This chain is Dihydroniloticin synthase CYP71CD2, found in Melia azedarach (Chinaberry tree).